The sequence spans 580 residues: Guanine nucleotide-binding protein alpha-4 subunit (580 aa).

A compositionally biased stretch (polar residues) spans 1 to 10 (MSPSVSSPQL). The disordered stretch occupies residues 1-28 (MSPSVSSPQLRHTKSNRAISRIDRTDPL). The region spanning 93 to 579 (RVYKMVLLGQ…RENLKLTGLV (487 aa)) is the G-alpha domain. Residues 96 to 109 (KMVLLGQAGAGKTT) are G1 motif. 101–108 (GQAGAGKT) is a GTP binding site. Disordered regions lie at residues 160–196 (KSSE…PNDA) and 302–325 (GRAA…KDNS). The segment covering 167–183 (LESSTSASTSTSASASS) has biased composition (low complexity). A G2 motif region spans residues 387-395 (DILHSRVRT). GTP contacts are provided by residues 389-395 (LHSRVRT), 415-419 (DVGGS), 484-487 (NKID), and Ala551. Thr395 is a Mg(2+) binding site. Residues 411–420 (YRIYDVGGSR) are G3 motif. Residues 480–487 (ILFLNKID) are G4 motif. The G5 motif stretch occupies residues 549–554 (TVATST).

The protein belongs to the G-alpha family. G proteins are composed of 3 units; alpha, beta and gamma. The alpha chain contains the guanine nucleotide binding site.

In terms of biological role, guanine nucleotide-binding proteins (G proteins) are involved as modulators or transducers in various transmembrane signaling systems. This Mycosarcoma maydis (Corn smut fungus) protein is Guanine nucleotide-binding protein alpha-4 subunit (GPA4).